The primary structure comprises 438 residues: Probable imidazolonepropionase (438 aa).

Residues tyrosine 159 and histidine 192 each coordinate 4-imidazolone-5-propanoate. N-formimidoyl-L-glutamate is bound at residue tyrosine 159. Histidine 260 serves as a coordination point for Fe(3+). Histidine 260 contacts Zn(2+). Glutamate 263 provides a ligand contact to 4-imidazolone-5-propanoate. Aspartate 334 contacts Fe(3+). Residue aspartate 334 coordinates Zn(2+). An N-formimidoyl-L-glutamate-binding site is contributed by asparagine 336.

It belongs to the metallo-dependent hydrolases superfamily. HutI family. Requires Zn(2+) as cofactor. Fe(3+) serves as cofactor.

The catalysed reaction is 4-imidazolone-5-propanoate + H2O = N-formimidoyl-L-glutamate. It participates in amino-acid degradation; L-histidine degradation into L-glutamate; N-formimidoyl-L-glutamate from L-histidine: step 3/3. The protein is Probable imidazolonepropionase (amdhd1) of Xenopus laevis (African clawed frog).